The following is a 189-amino-acid chain: Peptidyl-tRNA hydrolase (189 aa).

Residue tyrosine 14 coordinates tRNA. Residue histidine 19 is the Proton acceptor of the active site. The tRNA site is built by tyrosine 64, asparagine 66, and asparagine 112.

The protein belongs to the PTH family. In terms of assembly, monomer.

It localises to the cytoplasm. It catalyses the reaction an N-acyl-L-alpha-aminoacyl-tRNA + H2O = an N-acyl-L-amino acid + a tRNA + H(+). In terms of biological role, hydrolyzes ribosome-free peptidyl-tRNAs (with 1 or more amino acids incorporated), which drop off the ribosome during protein synthesis, or as a result of ribosome stalling. Catalyzes the release of premature peptidyl moieties from peptidyl-tRNA molecules trapped in stalled 50S ribosomal subunits, and thus maintains levels of free tRNAs and 50S ribosomes. The polypeptide is Peptidyl-tRNA hydrolase (Clostridium botulinum (strain Langeland / NCTC 10281 / Type F)).